Consider the following 245-residue polypeptide: Glutathione S-transferase F4 (245 aa).

A GST N-terminal domain is found at 25–106 (AGYKVHGDPF…YIAYVHSSRG (82 aa)). Glutathione-binding positions include 35-36 (ST), 64-65 (HK), 77-78 (QV), and 90-91 (ES). The GST C-terminal domain occupies 114-244 (SHETMATLTM…QEKSWFNKPR (131 aa)).

It belongs to the GST superfamily. Phi family.

The protein localises to the cytoplasm. It is found in the cytosol. The enzyme catalyses RX + glutathione = an S-substituted glutathione + a halide anion + H(+). Its function is as follows. May be involved in the conjugation of reduced glutathione to a wide number of exogenous and endogenous hydrophobic electrophiles and have a detoxification role against certain herbicides. This Arabidopsis thaliana (Mouse-ear cress) protein is Glutathione S-transferase F4 (GSTF4).